The sequence spans 571 residues: Zinc finger protein 181 (571 aa).

The region spanning 4 to 76 is the KRAB domain; sequence VTFNDVAIDF…EKKLSKGMIP (73 aa). Glycyl lysine isopeptide (Lys-Gly) (interchain with G-Cter in SUMO2) cross-links involve residues lysine 109 and lysine 126. C2H2-type zinc fingers lie at residues 237 to 259, 265 to 287, 293 to 315, 321 to 343, 349 to 371, 377 to 399, 405 to 427, 433 to 455, 461 to 483, 489 to 511, and 517 to 539; these read YTCS…WRIH, YECR…LISH, YKCI…QSTH, YECM…LRIH, YECR…QKIH, YECR…QRIH, YECN…QSIH, FECQ…LRNH, YECS…HRIH, YECI…QRIH, and YKCN…QRVH.

Belongs to the krueppel C2H2-type zinc-finger protein family.

It localises to the nucleus. May be involved in transcriptional regulation. This is Zinc finger protein 181 (ZNF181) from Homo sapiens (Human).